The chain runs to 509 residues: Scavenger receptor class B member 1 (509 aa).

Over 1-11 the chain is Cytoplasmic; sequence MGVSSRARWVA. Residues 12-32 traverse the membrane as a helical segment; the sequence is LGLGVLGLLCAALGVIMILMV. Topologically, residues 33–440 are extracellular; the sequence is PSLIKQQVLK…YTQLVLMPQV (408 aa). 10 N-linked (GlcNAc...) asparagine glycosylation sites follow: N102, N108, N116, N173, N212, N227, N255, N310, N330, and N383. C251 and C384 are disulfide-bonded. Residues 441 to 461 traverse the membrane as a helical segment; that stretch reads LHYAQYVLLGLGGLLLLVPII. At 462–509 the chain is on the cytoplasmic side; that stretch reads YQLRSQEKCFLFWSGSKKGSQDKEAMQAYSESLMSPAAKGTVLQEAKL.

The protein belongs to the CD36 family. The C-terminal region binds to PDZK1. In terms of processing, N-glycosylated. The six cysteines of the extracellular domain are all involved in intramolecular disulfide bonds.

It is found in the cell membrane. It localises to the membrane. Its subcellular location is the caveola. Functionally, receptor for different ligands such as phospholipids, cholesterol ester, lipoproteins, phosphatidylserine and apoptotic cells. Receptor for HDL, mediating selective uptake of cholesteryl ether and HDL-dependent cholesterol efflux. Also facilitates the flux of free and esterified cholesterol between the cell surface and apoB-containing lipoproteins and modified lipoproteins, although less efficiently than HDL. May be involved in the phagocytosis of apoptotic cells, via its phosphatidylserine binding activity. The polypeptide is Scavenger receptor class B member 1 (Scarb1) (Rattus norvegicus (Rat)).